Reading from the N-terminus, the 425-residue chain is Histidine--tRNA ligase (425 aa).

Belongs to the class-II aminoacyl-tRNA synthetase family. As to quaternary structure, homodimer.

It localises to the cytoplasm. It carries out the reaction tRNA(His) + L-histidine + ATP = L-histidyl-tRNA(His) + AMP + diphosphate + H(+). The sequence is that of Histidine--tRNA ligase from Streptomyces coelicolor (strain ATCC BAA-471 / A3(2) / M145).